The chain runs to 198 residues: Ribonuclease HII (198 aa).

One can recognise an RNase H type-2 domain in the interval 2–191 (VLECGVDETG…IRELLVGKDN (190 aa)). 3 residues coordinate a divalent metal cation: aspartate 8, glutamate 9, and aspartate 100.

Belongs to the RNase HII family. It depends on Mn(2+) as a cofactor. Requires Mg(2+) as cofactor.

The protein localises to the cytoplasm. It catalyses the reaction Endonucleolytic cleavage to 5'-phosphomonoester.. Functionally, endonuclease that specifically degrades the RNA of RNA-DNA hybrids. This Desulforamulus reducens (strain ATCC BAA-1160 / DSM 100696 / MI-1) (Desulfotomaculum reducens) protein is Ribonuclease HII.